The sequence spans 130 residues: Small ribosomal subunit protein uS11c (130 aa).

It belongs to the universal ribosomal protein uS11 family. Part of the 30S ribosomal subunit.

The protein resides in the plastid. It localises to the chloroplast. The protein is Small ribosomal subunit protein uS11c of Pinus koraiensis (Korean pine).